The following is a 124-amino-acid chain: UPF0482 protein YPK_1977 (124 aa).

The first 32 residues, 1 to 32 (MMKINNLPRLIRAFLPATLLMLPLVWQTPALA), serve as a signal peptide directing secretion. The tract at residues 47–69 (GGNNDPMSKEQARQSQQQWDETN) is disordered.

This sequence belongs to the UPF0482 family.

The protein is UPF0482 protein YPK_1977 of Yersinia pseudotuberculosis serotype O:3 (strain YPIII).